The chain runs to 206 residues: Probable glutathione peroxidase 3, mitochondrial (206 aa).

Residues M1–A12 constitute a mitochondrion transit peptide. C80 is a catalytic residue.

Belongs to the glutathione peroxidase family. As to quaternary structure, interacts with ABI1 and ABI2. As to expression, ubiquitous.

Its subcellular location is the mitochondrion. The catalysed reaction is 2 glutathione + H2O2 = glutathione disulfide + 2 H2O. Its activity is regulated as follows. The redox states are modulated by H(2)O(2). May constitute a glutathione peroxidase-like protective system against oxidative stresses. Involved positively in abscisic acid (ABA) signaling pathway that regulates numerous ABA responses, such as stomatal closure, seed germination and inhibition of vegetative growth. Oxidizes and represses target proteins (e.g. the phosphatase activity of ABI1 and ABI2) when oxidized by H(2)O(2), probably after ABA signaling. Modulates the calcium channel activity in guard cells in response to ABA or H(2)O(2). Confers tolerance to drought stress, by enhancing the ABA-dependent stomatal closure. This is Probable glutathione peroxidase 3, mitochondrial (GPX3) from Arabidopsis thaliana (Mouse-ear cress).